Reading from the N-terminus, the 549-residue chain is MDRSKVANAFAALDAYARRSGAPKIADLFAADPQRFDRFHARFDDLLYDFSKHRLDAETLRLLLDLGRAAEVEPRREALFEGDPVNITERRAALHMALRNLSGAPMRAAGEDVAAMVEAEREKLLAFAEAVRSGAIRAANGARFTDIVNFGIGGSDLGPAMAARALSPFIADHLRLHFVANVDGADFADTMRNTPVETTLFIVCSKTFTTLETMTNAATARAYVAERLGPDAIASHFCAVSTQLDRIAAFGVRSDRVFGFWDWVGGRYSIWSSIGLSLAIGVGRDNFEAFLRGGEDIDRHFREAPLERNIPVLMALIGVLNRNVFGYATQAVIPYDQRLARFPAYLQQLDMESNGKSVDLSGARVAYETSPVVWGEPGTNGQHAFFQLLHQGTEIVPVDFLVAAKPTAADETHHRILFANCLAQSQALMQGRPLEAVSAQLAAQGLSPDAIAALAPHKVFDGDRPSSTFLYTALTPRTLGRLIALYEHKIFVQGVIWDINSFDQWGVELGKELAQKLAPIVGDDSASTEALDASTAGLVQAARARRAGA.

The active-site Proton donor is the E352. Catalysis depends on residues H383 and K511.

This sequence belongs to the GPI family.

The protein localises to the cytoplasm. It catalyses the reaction alpha-D-glucose 6-phosphate = beta-D-fructose 6-phosphate. The protein operates within carbohydrate biosynthesis; gluconeogenesis. It participates in carbohydrate degradation; glycolysis; D-glyceraldehyde 3-phosphate and glycerone phosphate from D-glucose: step 2/4. Its function is as follows. Catalyzes the reversible isomerization of glucose-6-phosphate to fructose-6-phosphate. The sequence is that of Glucose-6-phosphate isomerase from Methylocella silvestris (strain DSM 15510 / CIP 108128 / LMG 27833 / NCIMB 13906 / BL2).